The primary structure comprises 306 residues: Cilia- and flagella-associated protein 73 (306 aa).

Coiled coils occupy residues L49–E139 and Q197–K231.

The protein belongs to the CFAP73 family.

It is found in the cytoplasm. It localises to the cytoskeleton. The protein resides in the cilium axoneme. Its function is as follows. May play a role in ciliary/flagellar motility by regulating the assembly and the activity of axonemal inner dynein arm. The chain is Cilia- and flagella-associated protein 73 from Mus musculus (Mouse).